We begin with the raw amino-acid sequence, 626 residues long: Two-component response regulator ORR24 (626 aa).

Positions Met-1–Arg-22 are disordered. The span at Arg-9–Arg-22 shows a compositional bias: gly residues. Positions Arg-30–Ile-145 constitute a Response regulatory domain. Residue Asp-81 is modified to 4-aspartylphosphate. Residues Asp-151–Gly-162 show a composition bias toward basic and acidic residues. Disordered stretches follow at residues Asp-151–Arg-215 and Pro-402–Asn-440. The span at Asn-191–Ser-202 shows a compositional bias: acidic residues. Positions Thr-210 to Lys-269 form a DNA-binding region, myb-like GARP. A compositionally biased stretch (polar residues) spans Pro-402–Pro-421.

The protein belongs to the ARR family. Type-B subfamily. In terms of processing, two-component system major event consists of a His-to-Asp phosphorelay between a sensor histidine kinase (HK) and a response regulator (RR). In plants, the His-to-Asp phosphorelay involves an additional intermediate named Histidine-containing phosphotransfer protein (HPt). This multistep phosphorelay consists of a His-Asp-His-Asp sequential transfer of a phosphate group between first a His and an Asp of the HK protein, followed by the transfer to a conserved His of the HPt protein and finally the transfer to an Asp in the receiver domain of the RR protein.

It localises to the nucleus. In terms of biological role, transcriptional activator that binds specific DNA sequence. Functions as a response regulator involved in His-to-Asp phosphorelay signal transduction system. Phosphorylation of the Asp residue in the receiver domain activates the ability of the protein to promote the transcription of target genes. May directly activate some type-A response regulators in response to cytokinins. This is Two-component response regulator ORR24 from Oryza sativa subsp. japonica (Rice).